Here is a 785-residue protein sequence, read N- to C-terminus: uncharacterized protein (785 aa).

The span at 53 to 65 (KNTLTGSHGSNDL) shows a compositional bias: polar residues. Residues 53–162 (KNTLTGSHGS…RKAADEQGPI (110 aa)) form a disordered region. The segment covering 66-79 (ATDESLDSPEDEEA) has biased composition (acidic residues). Over residues 81–94 (SPLQLGTPTSTTSG) the composition is skewed to polar residues. Serine 215 is modified (phosphoserine). Disordered regions lie at residues 571-590 (KVVD…TSVN) and 631-657 (DSSG…RIQF). The segment covering 575 to 584 (SDDEESDSDE) has biased composition (acidic residues). Position 667 is a phosphoserine (serine 667). A disordered region spans residues 693-785 (DPKMKFTSHP…FGSIFKKVFG (93 aa)). Positions 725–739 (RKAHHHHHHHNHVSR) are enriched in basic residues. Over residues 776–785 (FGSIFKKVFG) the composition is skewed to low complexity.

This is an uncharacterized protein from Saccharomyces cerevisiae (strain ATCC 204508 / S288c) (Baker's yeast).